The chain runs to 116 residues: S-adenosylmethionine decarboxylase proenzyme (116 aa).

Serine 63 functions as the Schiff-base intermediate with substrate; via pyruvic acid in the catalytic mechanism. Serine 63 is subject to Pyruvic acid (Ser); by autocatalysis. Histidine 68 (proton acceptor; for processing activity) is an active-site residue. Cysteine 83 functions as the Proton donor; for catalytic activity in the catalytic mechanism.

Belongs to the prokaryotic AdoMetDC family. Type 1 subfamily. Heterotetramer of two alpha and two beta chains arranged as a dimer of alpha/beta heterodimers. Requires pyruvate as cofactor. Post-translationally, is synthesized initially as an inactive proenzyme. Formation of the active enzyme involves a self-maturation process in which the active site pyruvoyl group is generated from an internal serine residue via an autocatalytic post-translational modification. Two non-identical subunits are generated from the proenzyme in this reaction, and the pyruvate is formed at the N-terminus of the alpha chain, which is derived from the carboxyl end of the proenzyme. The post-translation cleavage follows an unusual pathway, termed non-hydrolytic serinolysis, in which the side chain hydroxyl group of the serine supplies its oxygen atom to form the C-terminus of the beta chain, while the remainder of the serine residue undergoes an oxidative deamination to produce ammonia and the pyruvoyl group blocking the N-terminus of the alpha chain.

It carries out the reaction S-adenosyl-L-methionine + H(+) = S-adenosyl 3-(methylsulfanyl)propylamine + CO2. It functions in the pathway amine and polyamine biosynthesis; S-adenosylmethioninamine biosynthesis; S-adenosylmethioninamine from S-adenosyl-L-methionine: step 1/1. Its function is as follows. Catalyzes the decarboxylation of S-adenosylmethionine to S-adenosylmethioninamine (dcAdoMet), the propylamine donor required for the synthesis of the polyamines spermine and spermidine from the diamine putrescine. This is S-adenosylmethionine decarboxylase proenzyme from Clostridium botulinum (strain Okra / Type B1).